A 248-amino-acid polypeptide reads, in one-letter code: Probable transcriptional regulatory protein Smed_2641 (248 aa).

It belongs to the TACO1 family.

The protein localises to the cytoplasm. The sequence is that of Probable transcriptional regulatory protein Smed_2641 from Sinorhizobium medicae (strain WSM419) (Ensifer medicae).